A 561-amino-acid polypeptide reads, in one-letter code: Bifunctional NAD(P)H-hydrate repair enzyme (561 aa).

Positions 1 to 241 (MLSRISERCT…WMIAAERMDA (241 aa)) are NAD(P)H-hydrate epimerase. The YjeF N-terminal domain maps to 29–235 (LRDAEPAAAA…SLGLEEWMIA (207 aa)). The tract at residues 77-81 (NNGGD) is NADPHX 1; for epimerase activity. 2 residues coordinate K(+): Asn-78 and Asp-145. Residues 149-155 (GTGISGP) form an NADPHX 1; for epimerase activity region. 2 residues coordinate (6S)-NADPHX: Tyr-160 and Asp-178. K(+) is bound at residue Ser-181. Positions 249–548 (LGDVYGYFST…PRIPFIVNAS (300 aa)) constitute a YjeF C-terminal domain. An ADP-dependent (S)-NAD(P)H-hydrate dehydratase region spans residues 249 to 561 (LGDVYGYFST…SATQQRPSGL (313 aa)). Position 351 (Gly-351) interacts with (6S)-NADPHX. Residues 417 to 423 (HPGEAAR) are NADPHX 2; for dehydratase activity. ADP-binding positions include 454-458 (KGPGT) and 475-484 (NAGMASGGMG). A (6S)-NADPHX-binding site is contributed by Asp-485.

In the N-terminal section; belongs to the NnrE/AIBP family. This sequence in the C-terminal section; belongs to the NnrD/CARKD family. K(+) is required as a cofactor.

The enzyme catalyses (6S)-NADHX + ADP = AMP + phosphate + NADH + H(+). It carries out the reaction (6S)-NADPHX + ADP = AMP + phosphate + NADPH + H(+). It catalyses the reaction (6R)-NADHX = (6S)-NADHX. The catalysed reaction is (6R)-NADPHX = (6S)-NADPHX. Bifunctional enzyme that catalyzes the epimerization of the S- and R-forms of NAD(P)HX and the dehydration of the S-form of NAD(P)HX at the expense of ADP, which is converted to AMP. This allows the repair of both epimers of NAD(P)HX, a damaged form of NAD(P)H that is a result of enzymatic or heat-dependent hydration. The protein is Bifunctional NAD(P)H-hydrate repair enzyme of Leishmania braziliensis.